The primary structure comprises 3078 residues: Probable polyketide synthase 44 (3078 aa).

One can recognise a Ketosynthase family 3 (KS3) domain in the interval 10-435 (DNDVAIIGIG…GSNACLILTE (426 aa)). Active-site for beta-ketoacyl synthase activity residues include C175, H320, and H358. The interval 627–660 (GILASISIGHSLGEVSSAVCSGMIDLETGCFIIY) is acyl/malonyl transferase. The For acyl/malonyl transferase activity role is filled by S637. Residues 952–1072 (TNHLGYRNER…GRLSTTKHND (121 aa)) form an N-terminal hotdog fold region. The PKS/mFAS DH domain occupies 952–1239 (TNHLGYRNER…YTQLTPYKNQ (288 aa)). Catalysis depends on H984, which acts as the Proton acceptor; for dehydratase activity. The interval 1088-1239 (NFVTIQKKEL…YTQLTPYKNQ (152 aa)) is C-terminal hotdog fold. The active-site Proton donor; for dehydratase activity is the D1150. Positions 2080–2119 (LENIKTDLSNKNDNNNNNNNNNNDNKESNIKELLDNDDDE) form a coiled coil. Positions 2087-2108 (LSNKNDNNNNNNNNNNDNKESN) are disordered. Residues 2090-2102 (KNDNNNNNNNNNN) show a composition bias toward low complexity. The 79-residue stretch at 2558-2636 (SDDLSIREQI…QLIQSVTDAM (79 aa)) folds into the Carrier domain. S2596 carries the O-(pantetheine 4'-phosphoryl)serine modification. The helical transmembrane segment at 2694–2714 (NTVFLTGSSGFIGIYILFYLI) threads the bilayer.

It depends on pantetheine 4'-phosphate as a cofactor.

The protein localises to the membrane. Its function is as follows. Probable polyketide synthase. The chain is Probable polyketide synthase 44 (pks44) from Dictyostelium discoideum (Social amoeba).